Reading from the N-terminus, the 148-residue chain is Transcriptional regulator MraZ (148 aa).

SpoVT-AbrB domains lie at 5-51 and 80-123; these read STQL…PQPV and ACDV…DMAK.

The protein belongs to the MraZ family. In terms of assembly, forms oligomers.

Its subcellular location is the cytoplasm. It localises to the nucleoid. In Nitrosomonas eutropha (strain DSM 101675 / C91 / Nm57), this protein is Transcriptional regulator MraZ.